A 964-amino-acid chain; its full sequence is Siderophore exporter MmpL5 (964 aa).

12 helical membrane-spanning segments follow: residues 31–51 (FAVPIILGWLVTIAVLNVTVP), 203–223 (SLQVIEAVTFTVIIVMLLLVY), 230–250 (AIMLTMVVLGLLATRGGVAFL), 255–275 (IIGLSTFATNLLVVLAIAAAT), 302–322 (MFGGTAHVVLGSGLTIAGATF), 340–360 (AIGMVIVVAAALTLGPAIIAV), 389–409 (WPGPILVGAVALALVGLLTLP), 773–793 (TYDLMIAGISALCLIFIIMLI), 803–823 (VIVGTVVLSLGASFGLSVLIW), 826–846 (ILGIELHWLVLAMAVIILLAV), 880–900 (VVTAAGLVFAFTMMSFAVSEL), and 923–943 (SFMTPSIAALLGKWFWWPQVV).

It belongs to the resistance-nodulation-cell division (RND) (TC 2.A.6) family. MmpL subfamily. In terms of assembly, interacts with MmpS5.

It is found in the cell inner membrane. Its function is as follows. Part of an export system, which is required for biosynthesis and secretion of siderophores. This is Siderophore exporter MmpL5 (mmpL5) from Mycobacterium tuberculosis (strain CDC 1551 / Oshkosh).